An 845-amino-acid polypeptide reads, in one-letter code: Probable inorganic carbon transporter subunit DabA (845 aa).

The disordered stretch occupies residues 1–20 (MPMASGDESMSARSENPVQS). Zn(2+) contacts are provided by Cys-345, Asp-347, His-516, and Cys-531.

The protein belongs to the inorganic carbon transporter (TC 9.A.2) DabA family. In terms of assembly, forms a complex with DabB. The cofactor is Zn(2+).

The protein localises to the cell inner membrane. In terms of biological role, part of an energy-coupled inorganic carbon pump. The polypeptide is Probable inorganic carbon transporter subunit DabA (Azotobacter vinelandii (strain DJ / ATCC BAA-1303)).